The primary structure comprises 312 residues: Glycerol 2-dehydrogenase (NADP(+)) (312 aa).

Y56 functions as the Proton donor in the catalytic mechanism. Position 112 (H112) interacts with substrate. 220–274 (SPLGSTDAPLLKEPVILEIAKKNNVQPGHVVISWHVQRGYVVLPKSVNPDRIKTN) is an NADP(+) binding site. S306 carries the post-translational modification Phosphoserine.

It belongs to the aldo/keto reductase family.

It is found in the cytoplasm. It catalyses the reaction glycerol + NADP(+) = dihydroxyacetone + NADPH + H(+). Its function is as follows. Glycerol dehydrogenase involved in glycerol catabolism under microaerobic conditions. Has mRNA binding activity. This Saccharomyces cerevisiae (strain ATCC 204508 / S288c) (Baker's yeast) protein is Glycerol 2-dehydrogenase (NADP(+)) (GCY1).